Here is a 387-residue protein sequence, read N- to C-terminus: uncharacterized protein (387 aa).

It to M.jannaschii MJ0043 N-terminal region.

This is an uncharacterized protein from Bacillus subtilis (strain 168).